The following is a 376-amino-acid chain: TelA-like protein SERP0976 (376 aa).

It belongs to the TelA family.

The polypeptide is TelA-like protein SERP0976 (Staphylococcus epidermidis (strain ATCC 35984 / DSM 28319 / BCRC 17069 / CCUG 31568 / BM 3577 / RP62A)).